Consider the following 254-residue polypeptide: Nickel import ATP-binding protein NikO (254 aa).

The 242-residue stretch at 5–246 (FELQGVQFAY…TALLRRARLL (242 aa)) folds into the ABC transporter domain. Position 37–44 (37–44 (GANGSGKS)) interacts with ATP.

It belongs to the ABC transporter superfamily. In terms of assembly, forms an energy-coupling factor (ECF) transporter complex composed of an ATP-binding protein (A component, NikO), a transmembrane protein (T component, NikQ) and a fused possible substrate-capture protein (S component, NikMN) of unknown stoichimetry.

The protein localises to the cell inner membrane. It carries out the reaction Ni(2+)(out) + ATP + H2O = Ni(2+)(in) + ADP + phosphate + H(+). Part of the energy-coupling factor (ECF) transporter complex NikMNQO involved in nickel import. The complex confers nickel uptake upon expression in E.coli. Shows very low activity with cobalt. Presumably responsible for energy coupling to the transport system. This Rhodobacter capsulatus (strain ATCC BAA-309 / NBRC 16581 / SB1003) protein is Nickel import ATP-binding protein NikO.